The chain runs to 203 residues: GTP cyclohydrolase-2 (203 aa).

Residue 49–53 participates in GTP binding; sequence RIHSE. Residues C54, C65, and C67 each coordinate Zn(2+). GTP is bound by residues Q70, 92 to 94, and T114; that span reads EGR. The active-site Proton acceptor is D126. R128 serves as the catalytic Nucleophile. Residues T149 and K154 each contribute to the GTP site.

This sequence belongs to the GTP cyclohydrolase II family. Requires Zn(2+) as cofactor.

The enzyme catalyses GTP + 4 H2O = 2,5-diamino-6-hydroxy-4-(5-phosphoribosylamino)-pyrimidine + formate + 2 phosphate + 3 H(+). Its pathway is cofactor biosynthesis; riboflavin biosynthesis; 5-amino-6-(D-ribitylamino)uracil from GTP: step 1/4. Catalyzes the conversion of GTP to 2,5-diamino-6-ribosylamino-4(3H)-pyrimidinone 5'-phosphate (DARP), formate and pyrophosphate. This chain is GTP cyclohydrolase-2, found in Shewanella sp. (strain ANA-3).